Here is a 211-residue protein sequence, read N- to C-terminus: UPF0637 protein Bsph_1379 (211 aa).

This sequence belongs to the UPF0637 family.

The sequence is that of UPF0637 protein Bsph_1379 from Lysinibacillus sphaericus (strain C3-41).